The primary structure comprises 122 residues: 5'-AMP-activated protein kinase subunit beta-1 (122 aa).

Phosphoserine occurs at positions 5, 61, 66, and 73. Residues 33–122 are glycogen-binding domain; the sequence is EVNDKASAQA…TVNNIIQVKK (90 aa). T113 carries the post-translational modification Phosphothreonine.

This sequence belongs to the 5'-AMP-activated protein kinase beta subunit family. AMPK is a heterotrimer of an alpha catalytic subunit (PRKAA1 or PRKAA2), a beta (PRKAB1 or PRKAB2) and a gamma non-catalytic subunits (PRKAG1, PRKAG2 or PRKAG3). Interacts with FNIP1 and FNIP2. Post-translationally, phosphorylated when associated with the catalytic subunit (PRKAA1 or PRKAA2). Phosphorylated by ULK1; leading to negatively regulate AMPK activity and suggesting the existence of a regulatory feedback loop between ULK1 and AMPK.

Its function is as follows. Non-catalytic subunit of AMP-activated protein kinase (AMPK), an energy sensor protein kinase that plays a key role in regulating cellular energy metabolism. In response to reduction of intracellular ATP levels, AMPK activates energy-producing pathways and inhibits energy-consuming processes: inhibits protein, carbohydrate and lipid biosynthesis, as well as cell growth and proliferation. AMPK acts via direct phosphorylation of metabolic enzymes, and by longer-term effects via phosphorylation of transcription regulators. Also acts as a regulator of cellular polarity by remodeling the actin cytoskeleton; probably by indirectly activating myosin. Beta non-catalytic subunit acts as a scaffold on which the AMPK complex assembles, via its C-terminus that bridges alpha (PRKAA1 or PRKAA2) and gamma subunits (PRKAG1, PRKAG2 or PRKAG3). The chain is 5'-AMP-activated protein kinase subunit beta-1 (PRKAB1) from Sus scrofa (Pig).